Consider the following 437-residue polypeptide: Putrescine hydroxycinnamoyltransferase 3 (437 aa).

Catalysis depends on proton acceptor residues H151 and D383.

This sequence belongs to the plant acyltransferase family. In terms of tissue distribution, highly expressed in roots. Expressed at low levels in shoots and flowers.

In terms of biological role, hydroxycinnamoyl transferase that catalyzes the transfer of an acyl from p-coumaryol-CoA to putrescine, to produce coumaroyl putrescine. Can use feruloyl-CoA and caffeoyl-CoA as acyl donors. This is Putrescine hydroxycinnamoyltransferase 3 from Oryza sativa subsp. japonica (Rice).